The chain runs to 364 residues: Aspartate aminotransferase (364 aa).

L-aspartate contacts are provided by G23, W99, and N143. K200 bears the N6-(pyridoxal phosphate)lysine mark. R320 provides a ligand contact to L-aspartate.

It belongs to the class-I pyridoxal-phosphate-dependent aminotransferase family. In terms of assembly, homodimer. It depends on pyridoxal 5'-phosphate as a cofactor.

The protein localises to the cytoplasm. It carries out the reaction L-aspartate + 2-oxoglutarate = oxaloacetate + L-glutamate. The chain is Aspartate aminotransferase (aspC) from Thermococcus kodakarensis (strain ATCC BAA-918 / JCM 12380 / KOD1) (Pyrococcus kodakaraensis (strain KOD1)).